The primary structure comprises 2444 residues: Protein SON (2444 aa).

N-acetylalanine is present on Ala2. Lys16 is modified (N6-acetyllysine). Over residues 23 to 37 the composition is skewed to polar residues; sequence ELSSGRSEGQLNGET. The disordered stretch occupies residues 23–58; it reads ELSSGRSEGQLNGETNPPIEGNQAGDTAASARSLPN. A Glycyl lysine isopeptide (Lys-Gly) (interchain with G-Cter in SUMO2) cross-link involves residue Lys64. The segment covering 79–88 has biased composition (basic and acidic residues); sequence YKPDLKEASR. Residues 79 to 155 form a disordered region; it reads YKPDLKEASR…GNLESDSFLK (77 aa). Ser94 bears the Phosphoserine mark. The segment covering 106–130 has biased composition (basic residues); it reads KKSKKHKKHKNKKKKKKKEKEKKYK. Residues 131-155 show a composition bias toward basic and acidic residues; it reads RQPEESESKLKSHHDGNLESDSFLK. Residues Ser142, Ser150, Ser152, and Ser158 each carry the phosphoserine modification. At Lys284 the chain carries N6-acetyllysine. 2 disordered regions span residues 301–358 and 391–468; these read TLTI…ESLE and GPPV…PEPP. Pro residues-rich tracts occupy residues 393-406 and 420-439; these read PVTP…PSAT and PELP…PSVT. Thr395 carries the phosphothreonine modification. The 13 X 10 AA tandem repeats of L-A-[ST]-[NSG]-[TS]-MDSQM stretch occupies residues 721–850; it reads LASNTMDSQM…LATSSMDSQM (130 aa). Residues 907 to 983 are 11 X 7 AA tandem repeats of [DR]-P-Y-R-[LI][AG][QHP]; sequence DPYRLAQDPY…IAPRPYRLAP (77 aa). Omega-N-methylarginine is present on Arg945. Thr954 carries the phosphothreonine modification. Ser993 carries the post-translational modification Phosphoserine. 14 tandem repeats follow at residues 1001 to 1006, 1009 to 1014, 1016 to 1021, 1025 to 1030, 1033 to 1038, 1041 to 1046, 1050 to 1055, 1058 to 1063, 1066 to 1071, 1075 to 1080, 1084 to 1089, 1095 to 1100, 1106 to 1111, and 1115 to 1120. A 14 X 6 AA repeats of [ED]-R-S-M-M-S region spans residues 1001–1120; the sequence is ERSMMSSYER…SSYTDRSMMS (120 aa). An Asymmetric dimethylarginine modification is found at Arg1002. An Asymmetric dimethylarginine modification is found at Arg1017. Phosphoserine is present on residues Ser1030 and Ser1038. Phosphoserine is present on residues Ser1055 and Ser1063. Ser1077 carries the post-translational modification Phosphoserine. Positions 1141-1168 are enriched in pro residues; it reads PPLPPEEPPTMPPLPPEEPPMTPPLPPE. The interval 1141–1173 is 3 X 11 AA tandem repats of P-P-L-P-P-E-E-P-P-[TME]-[MTG]; that stretch reads PPLPPEEPPTMPPLPPEEPPMTPPLPPEEPPEG. Residues 1141 to 1213 form a disordered region; sequence PPLPPEEPPT…PEPPVSQSEI (73 aa). The span at 1177 to 1213 shows a compositional bias: polar residues; the sequence is STEQSALTADNTWSTEVTLSTGESLSQPEPPVSQSEI. Phosphoserine occurs at positions 1678, 1723, 1727, 1772, 1784, 1791, 1794, 1807, and 1808. Residues 1802–2072 are disordered; sequence ERASESSSEE…RSPKRLTDLD (271 aa). Basic and acidic residues-rich tracts occupy residues 1815 to 1826, 1834 to 1847, and 1855 to 1870; these read YEIFVKVKDTHE, RDKG…DSSL, and KSSE…ESRS. Basic residues-rich tracts occupy residues 1871-1934 and 1942-1973; these read RARK…RKRS and AARA…RRRS. 7 repeat units span residues 1950–1956, 1959–1977, 1978–1984, 1985–1991, 1992–1998, 1999–2005, and 2006–2012. The 7 X 7 AA repeats of P-S-R-R-S-R-[TS] stretch occupies residues 1950 to 2019; sequence PSRRSRSHTP…SRTPSRRRRS (70 aa). The 2 X 19 AA repeats of P-S-R-R-R-R-S-R-S-V-V-R-R-R-S-F-S-I-S stretch occupies residues 1959 to 2030; it reads PSRRRRSRSV…SAVRRRSFSI (72 aa). Phosphoserine occurs at positions 1973, 1975, and 1977. A compositionally biased stretch (basic residues) spans 1980 to 2027; the sequence is RRSRTPSRRSRTPSRRSRTPSRRSRTPSRRSRTPSRRRRSRSAVRRRS. One copy of the 2-7; approximate repeat lies at 2013 to 2019; it reads PSRRRRS. The stretch at 2020–2030 is one 3-2; approximate repeat; that stretch reads RSAVRRRSFSI. Phosphoserine occurs at positions 2027, 2029, 2031, 2047, and 2049. The 3 X tandem repeats of [ST]-P-[VLI]-R-[RL]-[RK]-[RF]-S-R stretch occupies residues 2031 to 2057; the sequence is SPVRLRRSRTPLRRRFSRSPIRRKRSR. A compositionally biased stretch (basic residues) spans 2034–2056; it reads RLRRSRTPLRRRFSRSPIRRKRS. Over residues 2057–2072 the composition is skewed to basic and acidic residues; it reads RSSERGRSPKRLTDLD. Lys2073 is subject to N6-acetyllysine; alternate. Lys2073 participates in a covalent cross-link: Glycyl lysine isopeptide (Lys-Gly) (interchain with G-Cter in SUMO2); alternate. Residue Lys2110 forms a Glycyl lysine isopeptide (Lys-Gly) (interchain with G-Cter in SUMO2) linkage. Phosphoserine is present on Ser2147. Residue Lys2167 forms a Glycyl lysine isopeptide (Lys-Gly) (interchain with G-Cter in SUMO2) linkage. At Thr2181 the chain carries Phosphothreonine. The segment at 2192–2238 is disordered; it reads EFPVSSGSQHRKKEADSVYGEWVPVEKNGEESKDDDNVFSSSLPSEP. At Ser2256 the chain carries Phosphoserine. In terms of domain architecture, G-patch spans 2323-2369; sequence TGGMGAVLMRKMGWREGEGLGKNKEGNKEPILVDFKTDRKGLVAVGE. One can recognise a DRBM domain in the interval 2389 to 2444; sequence HPVSALMEICNKRRWQPPEFLLVHDSGPDHRKHFLFRVLRNGSPYQPNCMFFLNRY.

Interacts with SRSF2. Associates with the spliceosome. Interacts with USH1G. Widely expressed. Highly expressed in brain, heart, spleen, liver, skeletal muscle, kidney and testis.

The protein resides in the nucleus speckle. RNA-binding protein that acts as a mRNA splicing cofactor by promoting efficient splicing of transcripts that possess weak splice sites. Specifically promotes splicing of many cell-cycle and DNA-repair transcripts that possess weak splice sites, such as TUBG1, KATNB1, TUBGCP2, AURKB, PCNT, AKT1, RAD23A, and FANCG. Probably acts by facilitating the interaction between Serine/arginine-rich proteins such as SRSF2 and the RNA polymerase II. Also binds to DNA; binds to the consensus DNA sequence: 5'-GA[GT]AN[CG][AG]CC-3'. Essential for correct RNA splicing of multiple genes critical for brain development, neuronal migration and metabolism, including TUBG1, FLNA, PNKP, WDR62, PSMD3, PCK2, PFKL, IDH2, and ACY1. May also regulate the ghrelin signaling in hypothalamic neuron by acting as a negative regulator of GHSR expression. This chain is Protein SON (Son), found in Mus musculus (Mouse).